The following is a 431-amino-acid chain: Enolase (431 aa).

Q164 is a binding site for (2R)-2-phosphoglycerate. E206 functions as the Proton donor in the catalytic mechanism. Residues D243, E288, and D315 each contribute to the Mg(2+) site. 4 residues coordinate (2R)-2-phosphoglycerate: K340, R369, S370, and K391. K340 acts as the Proton acceptor in catalysis.

It belongs to the enolase family. Requires Mg(2+) as cofactor.

It is found in the cytoplasm. The protein localises to the secreted. The protein resides in the cell surface. It catalyses the reaction (2R)-2-phosphoglycerate = phosphoenolpyruvate + H2O. Its pathway is carbohydrate degradation; glycolysis; pyruvate from D-glyceraldehyde 3-phosphate: step 4/5. Functionally, catalyzes the reversible conversion of 2-phosphoglycerate (2-PG) into phosphoenolpyruvate (PEP). It is essential for the degradation of carbohydrates via glycolysis. The chain is Enolase from Fervidobacterium nodosum (strain ATCC 35602 / DSM 5306 / Rt17-B1).